The primary structure comprises 470 residues: Serine hydroxymethyltransferase, cytosolic (470 aa).

A compositionally biased stretch (polar residues) spans 1–11; the sequence is MSAYALSQSHR. The tract at residues 1–23 is disordered; sequence MSAYALSQSHRQLTEGHLKDTDP. Serine 2 carries the N-acetylserine modification. Basic and acidic residues predominate over residues 12-23; that stretch reads QLTEGHLKDTDP. An N6-(pyridoxal phosphate)lysine modification is found at lysine 249.

Belongs to the SHMT family. As to quaternary structure, homotetramer. Pyridoxal 5'-phosphate is required as a cofactor.

It localises to the cytoplasm. It catalyses the reaction (6R)-5,10-methylene-5,6,7,8-tetrahydrofolate + glycine + H2O = (6S)-5,6,7,8-tetrahydrofolate + L-serine. It functions in the pathway one-carbon metabolism; tetrahydrofolate interconversion. Interconversion of serine and glycine. This Candida albicans (strain SC5314 / ATCC MYA-2876) (Yeast) protein is Serine hydroxymethyltransferase, cytosolic (SHM2).